The chain runs to 184 residues: ATP synthase subunit b, chloroplastic (184 aa).

The chain crosses the membrane as a helical span at residues 27–49; sequence LATNPINLSVVLGVLIFFGKGVL.

Belongs to the ATPase B chain family. F-type ATPases have 2 components, F(1) - the catalytic core - and F(0) - the membrane proton channel. F(1) has five subunits: alpha(3), beta(3), gamma(1), delta(1), epsilon(1). F(0) has four main subunits: a(1), b(1), b'(1) and c(10-14). The alpha and beta chains form an alternating ring which encloses part of the gamma chain. F(1) is attached to F(0) by a central stalk formed by the gamma and epsilon chains, while a peripheral stalk is formed by the delta, b and b' chains.

The protein localises to the plastid. It is found in the chloroplast thylakoid membrane. Functionally, f(1)F(0) ATP synthase produces ATP from ADP in the presence of a proton or sodium gradient. F-type ATPases consist of two structural domains, F(1) containing the extramembraneous catalytic core and F(0) containing the membrane proton channel, linked together by a central stalk and a peripheral stalk. During catalysis, ATP synthesis in the catalytic domain of F(1) is coupled via a rotary mechanism of the central stalk subunits to proton translocation. In terms of biological role, component of the F(0) channel, it forms part of the peripheral stalk, linking F(1) to F(0). The protein is ATP synthase subunit b, chloroplastic of Lepidium virginicum (Virginia pepperweed).